The chain runs to 586 residues: Ezrin (586 aa).

In terms of domain architecture, FERM spans 2–295 (PKPINVRVTT…GNHELYMRRR (294 aa)). K60 carries the post-translational modification N6-acetyllysine. The short motif at 115–120 (IYCPPE) is the [IL]-x-C-x-x-[DE] motif element. Y146 bears the Phosphotyrosine; by PDGFR mark. An interaction with SCYL3 region spans residues 244–586 (EIRNISFNDK…KQRIDEFEAM (343 aa)). A coiled-coil region spans residues 302 to 462 (VQQMKAQARE…QDDLVKTKEE (161 aa)). Positions 306–338 (KAQAREEKHQKQLERQQLETEKKRRETVEREKE) are disordered. Positions 308–338 (QAREEKHQKQLERQQLETEKKRRETVEREKE) are enriched in basic and acidic residues. S366 carries the post-translational modification Phosphoserine. At Y478 the chain carries Phosphotyrosine. S535 carries the post-translational modification Phosphoserine. T567 carries the post-translational modification Phosphothreonine; by ROCK2 and PKC/PRKCI.

In terms of assembly, interacts with PODXL and NHERF2. Found in a complex with EZR, PODXL and NHERF2. Interacts with PALS1. Interacts with MCC, PLEKHG6, SCYL3/PACE1, NHERF1 and TMEM8B. Interacts (when phosphorylated) with FES/FPS. Interacts with dimeric S100P, the interaction may be activating through unmasking of F-actin binding sites. Identified in complexes that contain VIM, EZR, AHNAK, BFSP1, BFSP2, ANK2, PLEC, PRX and spectrin. Detected in a complex composed of at least EZR, AHNAK, PPL and PRX. Interacts with PDPN (via cytoplasmic domain); activates RHOA and promotes epithelial-mesenchymal transition. Interacts with SPN/CD43 cytoplasmic tail, CD44 and ICAM2. Interacts with SLC9A3; interaction targets SLC9A3 to the apical membrane. Interacts with SLC9A1; regulates interactions of SLC9A1 with cytoskeletal and promotes stress fiber formation. Interacts with CLIC5; may work together in a complex which also includes RDX and MYO6 to stabilize linkages between the plasma membrane and subjacent actin cytoskeleton at the base of stereocilia. Post-translationally, phosphorylated by tyrosine-protein kinases. Phosphorylation by ROCK2 suppresses the head-to-tail association of the N-terminal and C-terminal halves resulting in an opened conformation which is capable of actin and membrane-binding. S-nitrosylation is induced by interferon-gamma and oxidatively-modified low-densitity lipoprotein (LDL(ox)) possibly implicating the iNOS-S100A8/9 transnitrosylase complex. As to expression, glomerular epithelium cell (podocyte). Expressed in cerebrum, cerebellum and hippocampus (at protein level). Expressed in the small intestine, lung, kidney and ovaries.

Its subcellular location is the apical cell membrane. It localises to the cell projection. The protein resides in the microvillus membrane. It is found in the ruffle membrane. The protein localises to the cytoplasm. Its subcellular location is the cell cortex. It localises to the cytoskeleton. The protein resides in the microvillus. With respect to regulation, a head-to-tail association, of the N-terminal and C-terminal halves results in a closed conformation (inactive form) which is incapable of actin or membrane-binding. Probably involved in connections of major cytoskeletal structures to the plasma membrane. In epithelial cells, required for the formation of microvilli and membrane ruffles on the apical pole. Along with PLEKHG6, required for normal macropinocytosis. The polypeptide is Ezrin (Ezr) (Rattus norvegicus (Rat)).